Reading from the N-terminus, the 439-residue chain is MTHQLRSRDIIALGFMTFALFVGAGNIIFPPMVGLQAGEHVWTAAFGFLITAVGLPVLTVVALAKVGGGVDSLSTPIGKVAGVLLATVCYLAVGPLFATPRTATVSFEVGIAPLTGDSALPLFIYSLVYFAIVILVSLYPGKLLDTVGNFLAPLKIIALVILSVAAIVWPAGSISTATEAYQNAAFSNGFVNGYLTMDTLGAMVFGIVIVNAARSRGVTEARLLTRYTVWAGLMAGVGLTLLYLALFRLGSDSASLVDQSANGAAILHAYVQHTFGGGGSFLLAALIFIACLVTAVGLTCACAEFFAQYVPLSYRTLVFILGGFSMVVSNLGLSQLIQISVPVLTAIYPPCIALVVLSFTRSWWHNSSRVIAPPMFISLLFGILDGIKASAFSDILPSWAQRLPLAEQGLAWLMPTVVMVVLAIIWDRAAGRQVTSSAH.

The Cytoplasmic portion of the chain corresponds to 1 to 9 (MTHQLRSRD). A helical membrane pass occupies residues 10 to 30 (IIALGFMTFALFVGAGNIIFP). Topologically, residues 31–45 (PMVGLQAGEHVWTAA) are periplasmic. Residues 46 to 66 (FGFLITAVGLPVLTVVALAKV) traverse the membrane as a helical segment. The Cytoplasmic portion of the chain corresponds to 67–79 (GGGVDSLSTPIGK). A helical transmembrane segment spans residues 80–100 (VAGVLLATVCYLAVGPLFATP). Over 101–118 (RTATVSFEVGIAPLTGDS) the chain is Periplasmic. A helical transmembrane segment spans residues 119–139 (ALPLFIYSLVYFAIVILVSLY). Topologically, residues 140 to 149 (PGKLLDTVGN) are cytoplasmic. Residues 150 to 170 (FLAPLKIIALVILSVAAIVWP) traverse the membrane as a helical segment. At 171–189 (AGSISTATEAYQNAAFSNG) the chain is on the periplasmic side. Residues 190-210 (FVNGYLTMDTLGAMVFGIVIV) traverse the membrane as a helical segment. The Cytoplasmic portion of the chain corresponds to 211–226 (NAARSRGVTEARLLTR). The helical transmembrane segment at 227–247 (YTVWAGLMAGVGLTLLYLALF) threads the bilayer. The Periplasmic segment spans residues 248–277 (RLGSDSASLVDQSANGAAILHAYVQHTFGG). A helical transmembrane segment spans residues 278–298 (GGSFLLAALIFIACLVTAVGL). Over 299–316 (TCACAEFFAQYVPLSYRT) the chain is Cytoplasmic. The helical transmembrane segment at 317–337 (LVFILGGFSMVVSNLGLSQLI) threads the bilayer. A topological domain (periplasmic) is located at residue glutamine 338. A helical membrane pass occupies residues 339–359 (ISVPVLTAIYPPCIALVVLSF). At 360–369 (TRSWWHNSSR) the chain is on the cytoplasmic side. Residues 370 to 390 (VIAPPMFISLLFGILDGIKAS) traverse the membrane as a helical segment. Residues 391–404 (AFSDILPSWAQRLP) lie on the Periplasmic side of the membrane. Residues 405–425 (LAEQGLAWLMPTVVMVVLAII) traverse the membrane as a helical segment. Residues 426–439 (WDRAAGRQVTSSAH) lie on the Cytoplasmic side of the membrane.

The protein belongs to the branched chain amino acid transporter family.

The protein resides in the cell inner membrane. Liv-II branched chain amino acid transport system, which transports leucine, valine and isoleucine. In Escherichia coli O157:H7, this protein is Branched-chain amino acid permease BrnQ (brnQ).